The following is a 162-amino-acid chain: CD-NTase-associated protein 7 (162 aa).

Residues 138–162 (HSGLTQSGGREYSSNGYGMQRKDYN) form a disordered region. Over residues 139–154 (SGLTQSGGREYSSNGY) the composition is skewed to polar residues.

Belongs to the HORMA family. HORMA1 subfamily. In terms of assembly, forms complexes with CdnC with 1:1 and 2:2 stoichimetry, and a 1:1:6 CdnC:Cap7:Cap6 complex.

Functionally, sensor protein of a CBASS antivirus system. CBASS (cyclic oligonucleotide-based antiphage signaling system) provides immunity against bacteriophage. The CD-NTase protein synthesizes cyclic nucleotides in response to infection; these serve as specific second messenger signals. The signals activate a diverse range of effectors, leading to bacterial cell death and thus abortive phage infection. A type III CBASS system. Expression of this CBASS system (Cap18-Cap6-Cap7-CdnC-CapW-Cap17) in a susceptible E.coli (strain MG1655) confers resistance to bacteriophage P1. The sensor protein for this CBASS system. Binds to a closure peptide, which allows it to activate CdnC for second messenger synthesis. The polypeptide is CD-NTase-associated protein 7 (Escherichia coli (strain KTE188)).